A 499-amino-acid polypeptide reads, in one-letter code: Kynurenine 3-monooxygenase 3 (499 aa).

It belongs to the aromatic-ring hydroxylase family. KMO subfamily. FAD serves as cofactor.

The protein resides in the mitochondrion outer membrane. It catalyses the reaction L-kynurenine + NADPH + O2 + H(+) = 3-hydroxy-L-kynurenine + NADP(+) + H2O. It functions in the pathway cofactor biosynthesis; NAD(+) biosynthesis; quinolinate from L-kynurenine: step 1/3. Its function is as follows. Catalyzes the hydroxylation of L-kynurenine (L-Kyn) to form 3-hydroxy-L-kynurenine (L-3OHKyn). Required for synthesis of quinolinic acid. The chain is Kynurenine 3-monooxygenase 3 (bna4-3) from Aspergillus niger (strain ATCC MYA-4892 / CBS 513.88 / FGSC A1513).